The sequence spans 213 residues: Adenylate kinase (213 aa).

G10–T15 lines the ATP pocket. Positions S30–V59 are NMP. AMP-binding positions include T31, R36, E57 to V59, G85 to R88, and Q92. Positions G126–D163 are LID. R127 serves as a coordination point for ATP. Residues C130 and C133 each coordinate Zn(2+). T136–Y137 is an ATP binding site. Zn(2+)-binding residues include C150 and C153. Residues R160 and R171 each coordinate AMP. ATP is bound at residue Q199.

Belongs to the adenylate kinase family. In terms of assembly, monomer.

The protein resides in the cytoplasm. It catalyses the reaction AMP + ATP = 2 ADP. The protein operates within purine metabolism; AMP biosynthesis via salvage pathway; AMP from ADP: step 1/1. Functionally, catalyzes the reversible transfer of the terminal phosphate group between ATP and AMP. Plays an important role in cellular energy homeostasis and in adenine nucleotide metabolism. This Lachnospira eligens (strain ATCC 27750 / DSM 3376 / VPI C15-48 / C15-B4) (Eubacterium eligens) protein is Adenylate kinase.